Consider the following 136-residue polypeptide: MEPNNLKEELVSVFEKACSSHKERLDFICSVRESDTFSNVDVPLAPIKTIIEIAKNEENQTEILKLAIENIKTLSTVGSGQYIASHFSTHNEVAIIFCISYFLYHFNFLHDENKKQLLKRAFEAVAEKIADYLNEN.

This is an uncharacterized protein from Mycoplasma pneumoniae (strain ATCC 29342 / M129 / Subtype 1) (Mycoplasmoides pneumoniae).